The following is a 350-amino-acid chain: Phosphoribosylformylglycinamidine cyclo-ligase (350 aa).

The protein belongs to the AIR synthase family.

It localises to the cytoplasm. The catalysed reaction is 2-formamido-N(1)-(5-O-phospho-beta-D-ribosyl)acetamidine + ATP = 5-amino-1-(5-phospho-beta-D-ribosyl)imidazole + ADP + phosphate + H(+). The protein operates within purine metabolism; IMP biosynthesis via de novo pathway; 5-amino-1-(5-phospho-D-ribosyl)imidazole from N(2)-formyl-N(1)-(5-phospho-D-ribosyl)glycinamide: step 2/2. This Cupriavidus necator (strain ATCC 17699 / DSM 428 / KCTC 22496 / NCIMB 10442 / H16 / Stanier 337) (Ralstonia eutropha) protein is Phosphoribosylformylglycinamidine cyclo-ligase.